The following is a 575-amino-acid chain: Amyloid-beta A4 precursor protein-binding family A member 3 (575 aa).

Position 1 is an N-acetylmethionine (Met-1). Positions 1–10 (MDFPTISRSP) are enriched in polar residues. 2 disordered regions span residues 1–50 (MDFP…LSRM) and 118–211 (CEEC…GPCD). Residue Ser-11 is modified to Phosphoserine. The segment covering 143 to 153 (EDPDEDSDSPE) has biased composition (acidic residues). Over residues 156-184 (EGASAEQEGSRSSSSSPEPWLETVPLVTP) the composition is skewed to low complexity. At Ser-171 the chain carries Phosphoserine. The segment at 215-364 (LLDGVIFGAR…QFLRESGIDP (150 aa)) is required for interaction with NECAB3. The region spanning 217–381 (DGVIFGARYL…SPGACHLHNG (165 aa)) is the PID domain. At Ser-372 the chain carries Phosphoserine. 2 consecutive PDZ domains span residues 394 to 480 (EVHL…IVHC) and 485 to 560 (TAII…TMPA).

As to quaternary structure, binds to the cytoplasmic domain of amyloid protein (APP) in vivo. Interacts with HIF1AN (via N-terminus). Interacts with NECAB3; seems to mediate the interaction between NECAB3 and HIF1AN. As to expression, expressed in all tissues examined with lower levels in brain and testis.

It is found in the cytoplasm. Its subcellular location is the perinuclear region. Its function is as follows. May modulate processing of the amyloid-beta precursor protein (APP) and hence formation of APP-beta. May enhance the activity of HIF1A in macrophages by inhibiting the activity of HIF1AN. The chain is Amyloid-beta A4 precursor protein-binding family A member 3 (APBA3) from Homo sapiens (Human).